The sequence spans 262 residues: Global transcriptional regulator CodY (262 aa).

The interval 1–159 is GAF domain; the sequence is MAHLLEKTRK…ASTVVGIQLL (159 aa). A DNA-binding region (H-T-H motif) is located at residues 207 to 226; sequence ASVIADRIGITRSVIVNALR.

It belongs to the CodY family.

It is found in the cytoplasm. DNA-binding global transcriptional regulator which is involved in the adaptive response to starvation and acts by directly or indirectly controlling the expression of numerous genes in response to nutrient availability. During rapid exponential growth, CodY is highly active and represses genes whose products allow adaptation to nutrient depletion. This Streptococcus pneumoniae (strain ATCC BAA-255 / R6) protein is Global transcriptional regulator CodY.